Reading from the N-terminus, the 830-residue chain is MGLGLLLPLLLLWTRGTQGSELDPKGQHVCVASSPSAELQCCAGWRQKDQECTIPICEGPDACQKDEVCVKPGLCRCKPGFFGAHCSSRCPGQYWGPDCRESCPCHPHGQCEPATGACQCQADRWGARCEFPCACGPHGRCDPATGVCHCEPGWWSSTCRRPCQCNTAAARCEQATGACVCKPGWWGRRCSFRCNCHGSPCEQDSGRCACRPGWWGPECQQQCECVRGRCSAASGECTCPPGFRGARCELPCPAGSHGVQCAHSCGRCKHNEPCSPDTGSCESCEPGWNGTQCQQPCLPGTFGESCEQQCPHCRHGEACEPDTGHCQRCDPGWLGPRCEDPCPTGTFGEDCGSTCPTCVQGSCDTVTGDCVCSAGYWGPSCNASCPAGFHGNNCSVPCECPEGLCHPVSGSCQPGSGSRDTALIAGSLVPLLLLFLGLACCACCCWAPRSDLKDRPARDGATVSRMKLQVWGTLTSLGSTLPCRSLSSHKLPWVTVSHHDPEVPFNHSFIEPPSAGWATDDSFSSDPESGEADEVPAYCVPPQEGMVPVAQAGSSEASLAAGAFPPPEDASTPFAIPRTSSLARAKRPSVSFAEGTKFAPQSRRSSGELSSPLRKPKRLSRGAQSGPEGREAEESTGPEEAEAPESFPAAASPGDSATGHRRPPLGGRTVAEHVEAIEGSVQESSGPVTTIYMLAGKPRGSEGPVRSVFRHFGSFQKGQAEAKVKRAIPKPPRQALNRKKGSPGLASGSVGQSPNSAPKAGLPGATGPMAVRPEEAVRGLGAGTESSRRAQEPVSGCGSPEQDPQKQAEEERQEEPEYENVVPISRPPEP.

The signal sequence occupies residues Met-1–Gly-19. Residues Ser-20 to Thr-421 are Extracellular-facing. EGF-like domains follow at residues Thr-53–Ser-87, Trp-95–Glu-130, Trp-155–Ser-191, and Trp-215–Glu-249. 12 cysteine pairs are disulfide-bonded: Cys-57/Cys-69, Cys-63/Cys-75, Cys-77/Cys-86, Cys-99/Cys-111, Cys-105/Cys-118, Cys-120/Cys-129, Cys-159/Cys-172, Cys-165/Cys-179, Cys-181/Cys-190, Cys-219/Cys-230, Cys-225/Cys-237, and Cys-239/Cys-248. Asn-289 carries an N-linked (GlcNAc...) asparagine glycan. EGF-like domains lie at Phe-302–Glu-339 and Cys-351–Asn-382. Cystine bridges form between Cys-306-Cys-319, Cys-313-Cys-326, Cys-329-Cys-338, Cys-355-Cys-363, Cys-358-Cys-370, and Cys-372-Cys-381. 2 N-linked (GlcNAc...) asparagine glycosylation sites follow: Asn-382 and Asn-393. A helical transmembrane segment spans residues Ala-422 to Ala-442. Residues Cys-443–Pro-830 are Cytoplasmic-facing. Disordered stretches follow at residues Gly-516–Cys-539, Ser-581–Val-688, and Phe-715–Pro-830. Phosphoserine occurs at positions 589 and 606. Acidic residues predominate over residues Glu-634 to Ala-643. Residues Pro-644–Pro-653 are compositionally biased toward low complexity.

Heterophilic interaction with SREC2 via its extracellular domain. The heterophilic interaction is suppressed by the presence of ligand such as Ac-LDL. Interacts with AVIL. Endothelial cells.

The protein localises to the membrane. Its function is as follows. Mediates the binding and degradation of acetylated low density lipoprotein (Ac-LDL). Mediates heterophilic interactions, suggesting a function as adhesion protein. Plays a role in the regulation of neurite-like outgrowth. This is Scavenger receptor class F member 1 (SCARF1) from Homo sapiens (Human).